A 360-amino-acid polypeptide reads, in one-letter code: uncharacterized protein (360 aa).

A disordered region spans residues 193–245 (SRHTRPKGQPLSSPKKNSGSAARPSTAIGLCRRSQTPGALQSTGPSNTELEPE). Composition is skewed to polar residues over residues 202–212 (PLSSPKKNSGS) and 225–241 (RSQTPGALQSTGPSNTE).

This is an uncharacterized protein from Homo sapiens (Human).